Here is a 135-residue protein sequence, read N- to C-terminus: ATP synthase epsilon chain (135 aa).

The protein belongs to the ATPase epsilon chain family. As to quaternary structure, F-type ATPases have 2 components, CF(1) - the catalytic core - and CF(0) - the membrane proton channel. CF(1) has five subunits: alpha(3), beta(3), gamma(1), delta(1), epsilon(1). CF(0) has three main subunits: a, b and c.

The protein localises to the cell inner membrane. Produces ATP from ADP in the presence of a proton gradient across the membrane. This chain is ATP synthase epsilon chain, found in Granulibacter bethesdensis (strain ATCC BAA-1260 / CGDNIH1).